We begin with the raw amino-acid sequence, 1224 residues long: ATP-dependent helicase/deoxyribonuclease subunit B (1224 aa).

The UvrD-like helicase ATP-binding domain maps to 1–326 (MSLRFILGRA…VCAAANRRSE (326 aa)). Residue 8–15 (GRAGTGKS) participates in ATP binding. The UvrD-like helicase C-terminal domain maps to 283 to 584 (QSAPRFQHPE…KLSLIPPELD (302 aa)). 4 residues coordinate [4Fe-4S] cluster: Cys841, Cys1176, Cys1179, and Cys1185.

It belongs to the helicase family. AddB/RexB type 1 subfamily. As to quaternary structure, heterodimer of AddA and AddB. Requires Mg(2+) as cofactor. The cofactor is [4Fe-4S] cluster.

Its function is as follows. The heterodimer acts as both an ATP-dependent DNA helicase and an ATP-dependent, dual-direction single-stranded exonuclease. Recognizes the chi site generating a DNA molecule suitable for the initiation of homologous recombination. The AddB subunit has 5' -&gt; 3' nuclease activity but not helicase activity. The protein is ATP-dependent helicase/deoxyribonuclease subunit B of Heliobacterium modesticaldum (strain ATCC 51547 / Ice1).